The chain runs to 306 residues: Secretory carrier-associated membrane protein 1 (306 aa).

The segment at 1 to 66 (MAGRYDSNPF…LPPEPAAFGA (66 aa)) is disordered. Residues 1 to 141 (MAGRYDSNPF…EIPSHLQRMQ (141 aa)) are Cytoplasmic-facing. Positions 25–36 (KAGGQPSYGGGA) are enriched in gly residues. Residues 40-55 (PNPRNVPSVSSNSRLS) are compositionally biased toward low complexity. A coiled-coil region spans residues 72-109 (LDSSKDLKNREKELQAREAELNKREKELKRREEAAARA). The next 4 helical transmembrane spans lie at 142–162 (YVAF…VIAV), 174–194 (IWLL…VLWY), 209–229 (FGLF…SAVA), and 257–277 (IFYF…IWVI). Over 278–306 (QQVYMYFRGSGKAAEMKRDATRGAMRAAF) the chain is Cytoplasmic.

This sequence belongs to the SCAMP family.

The protein resides in the cell membrane. Its subcellular location is the cytoplasmic vesicle. It localises to the secretory vesicle membrane. In terms of biological role, probably involved in membrane trafficking. The polypeptide is Secretory carrier-associated membrane protein 1 (SCAMP1) (Oryza sativa subsp. japonica (Rice)).